A 595-amino-acid chain; its full sequence is Aspartate--tRNA ligase (595 aa).

Glu-173 provides a ligand contact to L-aspartate. The interval 197–200 (QLFK) is aspartate. Residue Arg-219 participates in L-aspartate binding. Residues 219–221 (RDE) and Gln-228 contribute to the ATP site. His-449 is a binding site for L-aspartate. Glu-483 provides a ligand contact to ATP. Arg-490 provides a ligand contact to L-aspartate. 535–538 (GLDR) is an ATP binding site.

It belongs to the class-II aminoacyl-tRNA synthetase family. Type 1 subfamily. Homodimer.

It is found in the cytoplasm. The enzyme catalyses tRNA(Asp) + L-aspartate + ATP = L-aspartyl-tRNA(Asp) + AMP + diphosphate. Its function is as follows. Catalyzes the attachment of L-aspartate to tRNA(Asp) in a two-step reaction: L-aspartate is first activated by ATP to form Asp-AMP and then transferred to the acceptor end of tRNA(Asp). This Shewanella sediminis (strain HAW-EB3) protein is Aspartate--tRNA ligase.